The sequence spans 646 residues: Leukotriene A-4 hydrolase homolog (646 aa).

A peptide is bound by residues 172–174 (QCQ) and 307–312 (PYGGME). His-336 contributes to the Zn(2+) binding site. Glu-337 acts as the Proton acceptor in catalysis. 2 residues coordinate Zn(2+): His-340 and Glu-359. Residue Tyr-424 is the Proton donor of the active site.

It belongs to the peptidase M1 family. Zn(2+) serves as cofactor.

It is found in the cytoplasm. The protein resides in the nucleus. The catalysed reaction is leukotriene A4 + H2O = leukotriene B4. It participates in lipid metabolism; leukotriene B4 biosynthesis. In terms of biological role, aminopeptidase that preferentially cleaves tripeptides. Also has low epoxide hydrolase activity (in vitro). Can hydrolyze an epoxide moiety of LTA(4) to form LTB(4) (in vitro). This Botryotinia fuckeliana (strain B05.10) (Noble rot fungus) protein is Leukotriene A-4 hydrolase homolog.